The sequence spans 302 residues: Coiled-coil domain-containing protein 2 (302 aa).

Residues Met-1–Gly-22 form the signal peptide. Positions Phe-198–Val-234 form a coiled coil. A disordered region spans residues Ser-221 to Asp-257. Residues Gln-223–Asp-257 show a composition bias toward acidic residues. Asn-242 is a glycosylation site (N-linked (GlcNAc...) asparagine).

Component of the acid-insoluble organic matrix of calcified layers of the shell (at protein level).

It localises to the secreted. This Lottia gigantea (Giant owl limpet) protein is Coiled-coil domain-containing protein 2.